We begin with the raw amino-acid sequence, 765 residues long: Putative U-box domain-containing protein 50 (765 aa).

Residues 198–391 (QEIENYFQQL…NRRIEFCKER (194 aa)) are a coiled coil. The Protein kinase domain occupies 422–765 (SDRLRLKSGG…HSKRAAQASS (344 aa)). ATP-binding positions include 428–436 (KSGGNWTNV) and Lys-449. Residues 688 to 762 (DIPSVFMCPI…QDWHSKRAAQ (75 aa)) form the U-box domain.

This sequence belongs to the protein kinase superfamily. Ser/Thr protein kinase family.

It catalyses the reaction S-ubiquitinyl-[E2 ubiquitin-conjugating enzyme]-L-cysteine + [acceptor protein]-L-lysine = [E2 ubiquitin-conjugating enzyme]-L-cysteine + N(6)-ubiquitinyl-[acceptor protein]-L-lysine.. The protein operates within protein modification; protein ubiquitination. Functionally, functions as an E3 ubiquitin ligase. The protein is Putative U-box domain-containing protein 50 (PUB50) of Arabidopsis thaliana (Mouse-ear cress).